The sequence spans 184 residues: Dual-action ribosomal maturation protein DarP (184 aa).

The tract at residues Met-1–Asp-21 is disordered.

It belongs to the DarP family.

It is found in the cytoplasm. In terms of biological role, member of a network of 50S ribosomal subunit biogenesis factors which assembles along the 30S-50S interface, preventing incorrect 23S rRNA structures from forming. Promotes peptidyl transferase center (PTC) maturation. The polypeptide is Dual-action ribosomal maturation protein DarP (Edwardsiella ictaluri (strain 93-146)).